The primary structure comprises 440 residues: tRNA(Ile)-lysidine synthase (440 aa).

25–30 serves as a coordination point for ATP; it reads SGGVDS.

This sequence belongs to the tRNA(Ile)-lysidine synthase family.

The protein localises to the cytoplasm. It carries out the reaction cytidine(34) in tRNA(Ile2) + L-lysine + ATP = lysidine(34) in tRNA(Ile2) + AMP + diphosphate + H(+). In terms of biological role, ligates lysine onto the cytidine present at position 34 of the AUA codon-specific tRNA(Ile) that contains the anticodon CAU, in an ATP-dependent manner. Cytidine is converted to lysidine, thus changing the amino acid specificity of the tRNA from methionine to isoleucine. The chain is tRNA(Ile)-lysidine synthase from Vibrio cholerae serotype O1 (strain ATCC 39541 / Classical Ogawa 395 / O395).